The following is a 606-amino-acid chain: DNA mismatch repair protein MutL (606 aa).

The tract at residues 348–378 (QPHAQRPQAPWSAETSPFRPYPPAAGFSERP) is disordered.

This sequence belongs to the DNA mismatch repair MutL/HexB family.

This protein is involved in the repair of mismatches in DNA. It is required for dam-dependent methyl-directed DNA mismatch repair. May act as a 'molecular matchmaker', a protein that promotes the formation of a stable complex between two or more DNA-binding proteins in an ATP-dependent manner without itself being part of a final effector complex. This chain is DNA mismatch repair protein MutL, found in Rhizobium etli (strain CIAT 652).